A 673-amino-acid chain; its full sequence is Citrate exporter 1 (673 aa).

A disordered region spans residues 1–44; the sequence is MFNLNTKSSKEPEVTEVAVDSTPSSPVTRESSPESSPDNSAVDL. A compositionally biased stretch (polar residues) spans 21–39; the sequence is STPSSPVTRESSPESSPDN. A helical transmembrane segment spans residues 67–87; the sequence is FLVFGAMAFCMLVSFMDQNGI. N-linked (GlcNAc...) asparagine glycosylation occurs at Asn99. The next 4 membrane-spanning stretches (helical) occupy residues 103 to 123, 133 to 153, 164 to 184, and 194 to 214; these read TISW…VLYG, LVFM…ACAQ, FSGI…SDIV, and GILG…GAAF. Asn217 carries N-linked (GlcNAc...) asparagine glycosylation. The next 8 membrane-spanning stretches (helical) occupy residues 222–242, 261–281, 292–312, 322–342, 364–384, 393–413, 419–439, and 465–485; these read AIFY…FFIL, PGLF…AGGG, ISML…EGFF, IFGT…GIAY, AAGM…ISGQ, LEVI…KCFW, MALL…CFQP, and SFGG…SLKA. Asn526 carries an N-linked (GlcNAc...) asparagine glycan. The helical transmembrane segment at 529–549 threads the bilayer; sequence HTVFVFLCPIVGACLLVTVFV. The span at 564-596 shows a compositional bias: basic and acidic residues; that stretch reads AKTVEDKDKDESGTDCEDMTKGEVLVSEKEGKL. 2 disordered regions span residues 564 to 608 and 636 to 673; these read AKTV…MHFG and FPPM…IQEE. N-linked (GlcNAc...) asparagine glycosylation is found at Asn599 and Asn662.

Belongs to the major facilitator superfamily.

It is found in the cell membrane. It carries out the reaction citrate(in) = citrate(out). Transmembrane transporter that exports citrate across the cell membrane. The protein is Citrate exporter 1 of Yarrowia lipolytica (strain CLIB 122 / E 150) (Yeast).